The primary structure comprises 294 residues: MAGMKEIRGKIKSVQNTRKITKAMEMVAASKMRRAQERMRAARPYADKVRDIAAHMSRANPEYRHPFMVSNEGAKAAGIILVTTDKGLCGGMNTNVLRASLQKFKELEGQGKTIEATAIGTKGLGFLNRLRAKVVSNVVHLGDTPHLEKLIGAVKVQLDLYSEGKVSAVYLAYTRFVNTMKQEPVIEQLLPLSADQFERKEEDGATPSTQWDYIYEPDAQAVVDELLVRYVEALVYQAVAENMASEQSARMVAMKAASDNAKTVINELQLVYNKSRQAAITKELSEIVGGAAAV.

Belongs to the ATPase gamma chain family. As to quaternary structure, F-type ATPases have 2 components, CF(1) - the catalytic core - and CF(0) - the membrane proton channel. CF(1) has five subunits: alpha(3), beta(3), gamma(1), delta(1), epsilon(1). CF(0) has three main subunits: a, b and c.

It localises to the cell inner membrane. Produces ATP from ADP in the presence of a proton gradient across the membrane. The gamma chain is believed to be important in regulating ATPase activity and the flow of protons through the CF(0) complex. The protein is ATP synthase gamma chain of Paraburkholderia phytofirmans (strain DSM 17436 / LMG 22146 / PsJN) (Burkholderia phytofirmans).